The following is a 90-amino-acid chain: UPF0335 protein Smed_2680 (90 aa).

Belongs to the UPF0335 family.

The chain is UPF0335 protein Smed_2680 from Sinorhizobium medicae (strain WSM419) (Ensifer medicae).